Consider the following 482-residue polypeptide: Dual specificity protein phosphatase 10 (482 aa).

One can recognise a Rhodanese domain in the interval 168 to 285 (PSQGPVIIDC…FKQNHENLCD (118 aa)). An interaction with MAP kinases region spans residues 199–215 (KISRRRLQQGKITVLDL). Positions 321–464 (ELTPILPFLF…LLEFEEDLNN (144 aa)) constitute a Tyrosine-protein phosphatase domain. Cys408 functions as the Phosphocysteine intermediate in the catalytic mechanism.

Belongs to the protein-tyrosine phosphatase family. Non-receptor class dual specificity subfamily. In terms of assembly, monomer. Interacts with MAPK14. In terms of tissue distribution, expressed in keratinocytes (at protein level). Detected in brain.

It localises to the cytoplasm. Its subcellular location is the nucleus. The catalysed reaction is O-phospho-L-tyrosyl-[protein] + H2O = L-tyrosyl-[protein] + phosphate. It catalyses the reaction O-phospho-L-seryl-[protein] + H2O = L-seryl-[protein] + phosphate. The enzyme catalyses O-phospho-L-threonyl-[protein] + H2O = L-threonyl-[protein] + phosphate. In terms of biological role, protein phosphatase involved in the inactivation of MAP kinases. Has a specificity for the MAPK11/MAPK12/MAPK13/MAPK14 subfamily. It preferably dephosphorylates p38. The polypeptide is Dual specificity protein phosphatase 10 (DUSP10) (Homo sapiens (Human)).